Reading from the N-terminus, the 200-residue chain is Proteasome subunit beta 2 (200 aa).

The propeptide at 1 to 7 (METKKTG) is removed in mature form; by autocatalysis. The Nucleophile role is filled by threonine 8.

It belongs to the peptidase T1B family. In terms of assembly, the 20S proteasome core is composed of 14 alpha and 14 beta subunits that assemble into four stacked heptameric rings, resulting in a barrel-shaped structure. The two inner rings, each composed of seven catalytic beta subunits, are sandwiched by two outer rings, each composed of seven alpha subunits. The catalytic chamber with the active sites is on the inside of the barrel. Has a gated structure, the ends of the cylinder being occluded by the N-termini of the alpha-subunits. Is capped at one or both ends by the proteasome regulatory ATPase, PAN.

The protein resides in the cytoplasm. The catalysed reaction is Cleavage of peptide bonds with very broad specificity.. With respect to regulation, the formation of the proteasomal ATPase PAN-20S proteasome complex, via the docking of the C-termini of PAN into the intersubunit pockets in the alpha-rings, triggers opening of the gate for substrate entry. Interconversion between the open-gate and close-gate conformations leads to a dynamic regulation of the 20S proteasome proteolysis activity. Functionally, component of the proteasome core, a large protease complex with broad specificity involved in protein degradation. This chain is Proteasome subunit beta 2, found in Thermococcus onnurineus (strain NA1).